A 255-amino-acid polypeptide reads, in one-letter code: MSLMFGKARTCNIVTVPEHEPSEVNIVILGAMGSGKSALTVKFLTKRFISEYDPNLEDTYSSEEVVDQQPVLVKVMDTADQEGPVNGERYLGWANAFIIVYSIDNRSSFEVCQQYLETVSLYSKGLQPEAPVILLGNKVDMERYRQVSKADGAALALRFGCLFFEVSACLDFLSVQHIFHEAVREVRRETERSIRPLFISEDKSAISLSSAPPLTACYKELPTPATAKLVTVKSSRAQSKRRAPTLTLLKGFKIF.

Residues 30–37, 77–81, and 137–140 contribute to the GTP site; these read GAMGSGKS, DTADQ, and NKVD.

The protein belongs to the small GTPase superfamily. Ras family.

It carries out the reaction GTP + H2O = GDP + phosphate + H(+). In Danio rerio (Zebrafish), this protein is Ras-like protein family member 12 (RASL12).